A 110-amino-acid chain; its full sequence is Large ribosomal subunit protein P2B (110 aa).

Serine 29 is subject to Phosphoserine. A Glycyl lysine isopeptide (Lys-Gly) (interchain with G-Cter in ubiquitin) cross-link involves residue lysine 49. Residues 66–110 (VPTGGASSAAAGAAGAAAGGDAAEEEKEEEAKEESDDDMGFGLFD) form a disordered region. The span at 69–86 (GGASSAAAGAAGAAAGGD) shows a compositional bias: low complexity. Over residues 87 to 104 (AAEEEKEEEAKEESDDDM) the composition is skewed to acidic residues. Serine 100 carries the phosphoserine modification.

Belongs to the eukaryotic ribosomal protein P1/P2 family. In terms of assembly, component of the large ribosomal subunit (LSU). Mature yeast ribosomes consist of a small (40S) and a large (60S) subunit. The 40S small subunit contains 1 molecule of ribosomal RNA (18S rRNA) and 33 different proteins (encoded by 57 genes). The large 60S subunit contains 3 rRNA molecules (25S, 5.8S and 5S rRNA) and 46 different proteins (encoded by 81 genes). The 5 acidic ribosomal P-proteins form the stalk structure of the 60S subunit. They are organized as a pentameric complex in which uL10/P0 interacts with 2 heterodimers, P1A-P2B and P1B-P2A. The N-terminus is not modified.

The protein resides in the cytoplasm. Component of the ribosome, a large ribonucleoprotein complex responsible for the synthesis of proteins in the cell. The small ribosomal subunit (SSU) binds messenger RNAs (mRNAs) and translates the encoded message by selecting cognate aminoacyl-transfer RNA (tRNA) molecules. The large subunit (LSU) contains the ribosomal catalytic site termed the peptidyl transferase center (PTC), which catalyzes the formation of peptide bonds, thereby polymerizing the amino acids delivered by tRNAs into a polypeptide chain. The nascent polypeptides leave the ribosome through a tunnel in the LSU and interact with protein factors that function in enzymatic processing, targeting, and the membrane insertion of nascent chains at the exit of the ribosomal tunnel. This is Large ribosomal subunit protein P2B from Saccharomyces cerevisiae (strain ATCC 204508 / S288c) (Baker's yeast).